Here is a 1076-residue protein sequence, read N- to C-terminus: Nucleoporin NUP1 (1076 aa).

A compositionally biased stretch (low complexity) spans 1-11 (MSSNTSSVMSS). The segment at 1–39 (MSSNTSSVMSSPRVEKRSFSSTLKSFFTNPNKKRPSSKK) is disordered. Ser2 carries the post-translational modification N-acetylserine. Residues 19–30 (FSSTLKSFFTNP) show a composition bias toward polar residues. Residues Ser54 and Ser161 each carry the phosphoserine modification. 2 disordered regions span residues 143–183 (SQSK…TNVG) and 224–260 (KKDNKDKEGNAGGDQKTSENRNNIKSSISNGNLATGP). Composition is skewed to polar residues over residues 154–170 (LCTSSTPSPIKNGSCTR) and 243–260 (NRNNIKSSISNGNLATGP). The stretch at 336 to 338 (FDF) is one FXF 1 repeat. Thr381 bears the Phosphothreonine mark. Position 383 is a phosphoserine (Ser383). An FXF 2 repeat occupies 384–386 (FNF). A disordered region spans residues 403 to 518 (TTLFNFGGKS…SFVFGASDKQ (116 aa)). FXFG repeat units follow at residues 406–409 (FNFG) and 422–425 (FKFG). A compositionally biased stretch (basic and acidic residues) spans 426-439 (KTSEKSENHTESDA). 2 FXFG repeats span residues 448–451 (FSFG) and 484–487 (FDFG). Positions 488-505 (KTGDQKETKKGESEKDAS) are enriched in basic and acidic residues. FXFG repeat units lie at residues 510–513 (FVFG), 525–528 (FTFG), 543–546 (FTFG), and 571–574 (FTFG). Residues 548 to 743 (AATAKETHTK…SMKSTASTAA (196 aa)) form a disordered region. 4 FXF repeats span residues 591–593 (FSF), 614–616 (FSF), 636–638 (FSF), and 657–659 (FTF). 2 stretches are compositionally biased toward polar residues: residues 634 to 649 (PTFSFTEPAQKDSSVV) and 658 to 667 (TFASSKTSQP). Ser637 is subject to Phosphoserine. The FXFG 9 repeat unit spans residues 671-674 (FSFG). The FXF 7 repeat unit spans residues 689 to 691 (FSF). FXFG repeat units follow at residues 708–711 (FTFG) and 727–730 (FSFG). The segment covering 708–723 (FTFGGSTTNNTTTTST) has biased composition (low complexity). The stretch at 753–755 (FSF) is one FXF 8 repeat. The stretch at 800-803 (FSFG) is one FXFG 12 repeat. 2 FXF repeats span residues 819 to 821 (FSF) and 866 to 868 (FGF). The stretch at 885 to 888 (FNFG) is one FXFG 13 repeat. The stretch at 929 to 931 (FNF) is one FXF 11 repeat. The interval 940–979 (GGSVFNMNGNTNANTVFAGSNNQPHQSQTPSFNTNSSFTP) is disordered. Polar residues predominate over residues 944 to 964 (FNMNGNTNANTVFAGSNNQPH). Residues 965 to 979 (QSQTPSFNTNSSFTP) show a composition bias toward low complexity. 3 FG repeats span residues 1008–1009 (FG), 1027–1028 (FG), and 1038–1039 (FG). A disordered region spans residues 1025–1054 (SIFGGAGGVPTTSFGQPQSAPNQMGMGTNN). Residues 1034–1045 (PTTSFGQPQSAP) are compositionally biased toward polar residues. Residues 1040–1076 (QPQSAPNQMGMGTNNGMSMGGGVMANRKIARMRHSKR) are interaction with KAP95.

As to quaternary structure, component of the nuclear pore complex (NPC). NPC constitutes the exclusive means of nucleocytoplasmic transport. NPCs allow the passive diffusion of ions and small molecules and the active, nuclear transport receptor-mediated bidirectional transport of macromolecules such as proteins, RNAs, ribonucleoparticles (RNPs), and ribosomal subunits across the nuclear envelope. Due to its 8-fold rotational symmetry, all subunits are present with 8 copies or multiples thereof. Interacts through its FG repeats with nuclear transport receptors. Binds to the nuclear basket of the NPC through NUP60. Interacts with KAP122. Phosphorylated by CDC28.

The protein resides in the nucleus. Its subcellular location is the nuclear pore complex. The protein localises to the nucleus membrane. In terms of biological role, functions as a component of the nuclear pore complex (NPC). NPC components, collectively referred to as nucleoporins (NUPs), can play the role of both NPC structural components and of docking or interaction partners for transiently associated nuclear transport factors. Active directional transport is assured by both, a Phe-Gly (FG) repeat affinity gradient for these transport factors across the NPC and a transport cofactor concentration gradient across the nuclear envelope (GSP1 and GSP2 GTPases associated predominantly with GTP in the nucleus, with GDP in the cytoplasm). As one of the FG repeat nucleoporins NUP1 is involved in interactions with and guidance of nuclear transport receptors such as SRP1-KAP95 (importin alpha and beta) through the NPC. Like the closely related NUP2 it also plays an important role in disassembling and recycling SRP1-KAP95 to the cytoplasm after nuclear import. Upon entry of the heterotrimeric SRP1-KAP95-cargo complex in the nucleus, NUP1 binds through its C-terminus to KAP95, thus accelerating the release of KAP95 and, indirectly, of the nuclear localization signal (NLS)-containing cargo from the SRP1-KAP95-cargo complex. This chain is Nucleoporin NUP1 (NUP1), found in Saccharomyces cerevisiae (strain ATCC 204508 / S288c) (Baker's yeast).